Reading from the N-terminus, the 92-residue chain is RIIa domain-containing protein 1 (92 aa).

An RIIa domain is found at 43–77 (KEVELLISGFFREMFLKRPDNIPEFAADYFTDPRL).

The sequence is that of RIIa domain-containing protein 1 (RIIAD1) from Bos taurus (Bovine).